The following is a 24-amino-acid chain: Brevinin-1JDb (24 aa).

An intrachain disulfide couples C18 to C24.

Expressed by the skin glands.

The protein localises to the secreted. Its function is as follows. Has antibacterial activity against E.coli and S.aureus strains. Has antifungal activity against C.albicans. Has hemolytic activity against rabbit erythrocytes. The chain is Brevinin-1JDb from Odorrana jingdongensis (Jingdong frog).